The following is a 298-amino-acid chain: N-acetylmuramic acid 6-phosphate etherase (298 aa).

The SIS domain maps to 55-218 (IHAQVSGGGR…STGLMIKSGK (164 aa)). Glu-83 (proton donor) is an active-site residue. Residue Glu-114 is part of the active site.

This sequence belongs to the GCKR-like family. MurNAc-6-P etherase subfamily. Homodimer.

The enzyme catalyses N-acetyl-D-muramate 6-phosphate + H2O = N-acetyl-D-glucosamine 6-phosphate + (R)-lactate. The protein operates within amino-sugar metabolism; 1,6-anhydro-N-acetylmuramate degradation. It functions in the pathway amino-sugar metabolism; N-acetylmuramate degradation. Its pathway is cell wall biogenesis; peptidoglycan recycling. Its function is as follows. Specifically catalyzes the cleavage of the D-lactyl ether substituent of MurNAc 6-phosphate, producing GlcNAc 6-phosphate and D-lactate. Together with AnmK, is also required for the utilization of anhydro-N-acetylmuramic acid (anhMurNAc) either imported from the medium or derived from its own cell wall murein, and thus plays a role in cell wall recycling. The chain is N-acetylmuramic acid 6-phosphate etherase from Shigella boydii serotype 18 (strain CDC 3083-94 / BS512).